Consider the following 312-residue polypeptide: Methionyl-tRNA formyltransferase (312 aa).

A (6S)-5,6,7,8-tetrahydrofolate-binding site is contributed by Ser109–Pro112.

This sequence belongs to the Fmt family.

It catalyses the reaction L-methionyl-tRNA(fMet) + (6R)-10-formyltetrahydrofolate = N-formyl-L-methionyl-tRNA(fMet) + (6S)-5,6,7,8-tetrahydrofolate + H(+). Attaches a formyl group to the free amino group of methionyl-tRNA(fMet). The formyl group appears to play a dual role in the initiator identity of N-formylmethionyl-tRNA by promoting its recognition by IF2 and preventing the misappropriation of this tRNA by the elongation apparatus. The chain is Methionyl-tRNA formyltransferase from Dictyoglomus thermophilum (strain ATCC 35947 / DSM 3960 / H-6-12).